The following is a 524-amino-acid chain: 2-isopropylmalate synthase (524 aa).

Residues 5-267 (VIIFDTTLRD…HTNIRHSEIH (263 aa)) enclose the Pyruvate carboxyltransferase domain. Positions 14, 202, 204, and 238 each coordinate Mn(2+). The tract at residues 392-524 (KLEYLGVQSG…KTDKINTESV (133 aa)) is regulatory domain.

This sequence belongs to the alpha-IPM synthase/homocitrate synthase family. LeuA type 1 subfamily. In terms of assembly, homodimer. Mn(2+) is required as a cofactor.

It localises to the cytoplasm. The enzyme catalyses 3-methyl-2-oxobutanoate + acetyl-CoA + H2O = (2S)-2-isopropylmalate + CoA + H(+). It participates in amino-acid biosynthesis; L-leucine biosynthesis; L-leucine from 3-methyl-2-oxobutanoate: step 1/4. In terms of biological role, catalyzes the condensation of the acetyl group of acetyl-CoA with 3-methyl-2-oxobutanoate (2-ketoisovalerate) to form 3-carboxy-3-hydroxy-4-methylpentanoate (2-isopropylmalate). The polypeptide is 2-isopropylmalate synthase (Aeromonas hydrophila subsp. hydrophila (strain ATCC 7966 / DSM 30187 / BCRC 13018 / CCUG 14551 / JCM 1027 / KCTC 2358 / NCIMB 9240 / NCTC 8049)).